The chain runs to 355 residues: Beta-ketoacyl-[acyl-carrier-protein] synthase III (355 aa).

Residues cysteine 122 and histidine 280 contribute to the active site. The ACP-binding stretch occupies residues 281 to 285 (QANMR). Asparagine 311 is a catalytic residue.

The protein belongs to the thiolase-like superfamily. FabH family. In terms of assembly, homodimer.

It is found in the cytoplasm. The enzyme catalyses malonyl-[ACP] + acetyl-CoA + H(+) = 3-oxobutanoyl-[ACP] + CO2 + CoA. The protein operates within lipid metabolism; fatty acid biosynthesis. Catalyzes the condensation reaction of fatty acid synthesis by the addition to an acyl acceptor of two carbons from malonyl-ACP. Catalyzes the first condensation reaction which initiates fatty acid synthesis and may therefore play a role in governing the total rate of fatty acid production. Possesses both acetoacetyl-ACP synthase and acetyl transacylase activities. Its substrate specificity determines the biosynthesis of branched-chain and/or straight-chain of fatty acids. This Kocuria rhizophila (strain ATCC 9341 / DSM 348 / NBRC 103217 / DC2201) protein is Beta-ketoacyl-[acyl-carrier-protein] synthase III.